The sequence spans 261 residues: (3R)-3-hydroxyacyl-CoA dehydrogenase (261 aa).

NAD(+) contacts are provided by residues 15–23 (LVTGAGSGI) and 42–43 (DL). Serine 60 carries the post-translational modification Phosphoserine. 74 to 76 (ADV) serves as a coordination point for NAD(+). Serine 156 is a binding site for substrate. Lysine 160 bears the N6-succinyllysine mark. Tyrosine 169 acts as the Proton acceptor in catalysis. NAD(+) contacts are provided by residues 169–173 (YAASK) and 202–204 (IAT). Residue lysine 173 is modified to N6-succinyllysine.

This sequence belongs to the short-chain dehydrogenases/reductases (SDR) family. In terms of assembly, heterotetramer with CBR4; contains two molecules of HSD17B8 and CBR4. In terms of tissue distribution, widely expressed, particularly abundant in prostate, placenta and kidney. Expressed at protein level in various tissues like brain, cerebellum, heart, lung, kidney, ovary, testis, adrenals and prostate.

The protein resides in the mitochondrion matrix. The enzyme catalyses a (3R)-3-hydroxyacyl-CoA + NAD(+) = a 3-oxoacyl-CoA + NADH + H(+). It catalyses the reaction 17beta-estradiol + NAD(+) = estrone + NADH + H(+). The catalysed reaction is testosterone + NAD(+) = androst-4-ene-3,17-dione + NADH + H(+). It carries out the reaction 17beta-hydroxy-5alpha-androstan-3-one + NAD(+) = 5alpha-androstan-3,17-dione + NADH + H(+). The protein operates within steroid biosynthesis; estrogen biosynthesis. It functions in the pathway lipid metabolism; fatty acid biosynthesis. It participates in lipid metabolism; mitochondrial fatty acid beta-oxidation. In terms of biological role, required for the solubility and assembly of the heterotetramer 3-ketoacyl-[acyl carrier protein] (ACP) reductase functional complex (KAR or KAR1) that forms part of the mitochondrial fatty acid synthase (mtFAS). Alpha-subunit of the KAR complex that acts as a scaffold protein required for the stability of carbonyl reductase type-4 (CBR4, beta-subunit of the KAR complex) and for its 3-ketoacyl-ACP reductase activity, thereby participating in mitochondrial fatty acid biosynthesis. Catalyzes the NAD-dependent conversion of (3R)-3-hydroxyacyl-CoA into 3-ketoacyl-CoA (3-oxoacyl-CoA) with no chain length preference; this enzymatic activity is not needed for the KAR function. Prefers (3R)-3-hydroxyacyl-CoA over (3S)-3-hydroxyacyl-CoA and displays enzymatic activity only in the presence of NAD(+). Cooperates with enoyl-CoA hydratase 1 in mitochondria, together they constitute an alternative route to the auxiliary enzyme pathways for the breakdown of Z-PUFA (cis polyunsaturated fatty acid) enoyl-esters. NAD-dependent 17-beta-hydroxysteroid dehydrogenase with highest activity towards estradiol (17beta-estradiol or E2). Has very low activity towards testosterone and dihydrotestosterone (17beta-hydroxy-5alpha-androstan-3-one). Primarily an oxidative enzyme, it can switch to a reductive mode determined in the appropriate physiologic milieu and catalyze the reduction of estrone (E1) to form biologically active 17beta-estradiol. In Homo sapiens (Human), this protein is (3R)-3-hydroxyacyl-CoA dehydrogenase (HSD17B8).